We begin with the raw amino-acid sequence, 167 residues long: Ribosome maturation factor RimM (167 aa).

The PRC barrel domain occupies 94–165 (ENEFYYSDII…KIIITPMEGL (72 aa)).

This sequence belongs to the RimM family. In terms of assembly, binds ribosomal protein uS19.

It localises to the cytoplasm. An accessory protein needed during the final step in the assembly of 30S ribosomal subunit, possibly for assembly of the head region. Essential for efficient processing of 16S rRNA. May be needed both before and after RbfA during the maturation of 16S rRNA. It has affinity for free ribosomal 30S subunits but not for 70S ribosomes. This is Ribosome maturation factor RimM from Staphylococcus aureus (strain MRSA252).